The following is an 80-amino-acid chain: Exodeoxyribonuclease 7 small subunit (80 aa).

The protein belongs to the XseB family. In terms of assembly, heterooligomer composed of large and small subunits.

Its subcellular location is the cytoplasm. It carries out the reaction Exonucleolytic cleavage in either 5'- to 3'- or 3'- to 5'-direction to yield nucleoside 5'-phosphates.. Bidirectionally degrades single-stranded DNA into large acid-insoluble oligonucleotides, which are then degraded further into small acid-soluble oligonucleotides. The protein is Exodeoxyribonuclease 7 small subunit of Aliivibrio salmonicida (strain LFI1238) (Vibrio salmonicida (strain LFI1238)).